The primary structure comprises 281 residues: Lectin (281 aa).

The signal sequence occupies residues 1–26 (MATYKLCSVLALSLTLFLLILNKVNS). N-linked (GlcNAc...) asparagine glycans are attached at residues Asn43 and Asn139. Positions 269–281 (AVIPTSNHNTFAI) are excised as a propeptide.

It belongs to the leguminous lectin family. In terms of assembly, homodimer. A minor C-terminal proteolytic processing site is observed at position 268.

Galactose and N-acetyllactosamine specific lectin. Binds to the H-2 blood type determinant fucosyl-N-acetyllactosamine. This Erythrina corallodendron (Coral tree) protein is Lectin.